Reading from the N-terminus, the 323-residue chain is Large ribosomal subunit protein uL10x (323 aa).

Residues 287–323 form a disordered region; sequence DAGGGSAQAGAAAKVEEKKEESDEEDYEGGFGLFDEE. S308 bears the Phosphoserine mark. The segment covering 308–323 has biased composition (acidic residues); it reads SDEEDYEGGFGLFDEE. Y313 bears the Phosphotyrosine mark.

Belongs to the universal ribosomal protein uL10 family. P0 forms a pentameric complex by interaction with dimers of P1 and P2.

Functionally, ribosomal protein P0 is the functional equivalent of E.coli protein L10. The chain is Large ribosomal subunit protein uL10x (RPP0C) from Arabidopsis thaliana (Mouse-ear cress).